The following is a 230-amino-acid chain: Sodium channel modifier 1 (230 aa).

Position 2 is a phosphoserine (S2). The Bipartite nuclear localization signal signature appears at 4 to 20 (KREGDDWSQLNVLKKRR). The segment at 42–74 (FACAICPHRPVLDTLAMLTAHRAGKKHLSSLQL) adopts a Matrin-type zinc-finger fold. A Glycyl lysine isopeptide (Lys-Gly) (interchain with G-Cter in SUMO2) cross-link involves residue K67. Disordered regions lie at residues 76–106 (YGKK…EAPL) and 129–191 (RRKY…RALD). Residues 89–100 (PRQHNELRREET) are compositionally biased toward basic and acidic residues. A compositionally biased stretch (pro residues) spans 142–151 (SRPPLPPPEV). The span at 167-180 (GSQTKESATVSSPA) shows a compositional bias: polar residues. 2 positions are modified to phosphoserine: S183 and S219. Residues 188–230 (RALDHYLTLRSSGWIPDGRGRWIKDENVEFDSDEEEPPDLPLD) are required for interaction with LUC7L2.

Component of the minor spliceosome. Within this complex, interacts with RNF113A, as well as with SF3B1/SF3b155, SF3B2/SF3b145, SF3B3/SF3b130 and CDC5L. May interact with LUC7L2 and SNRNP70.

The protein resides in the nucleus. Its subcellular location is the nucleoplasm. The protein localises to the nucleus speckle. As a component of the minor spliceosome, involved in the splicing of U12-type introns in pre-mRNAs. Plays a role in the regulation of primary cilia length and Hedgehog signaling. The sequence is that of Sodium channel modifier 1 (SCNM1) from Bos taurus (Bovine).